Here is a 266-residue protein sequence, read N- to C-terminus: MWYSTESNPRIALIKQGYHILAEYNLVKEELKNIYAIPSYACALHWFGVIFVHSGIYAGSVFRFSILLPENFPDDVSLLTVVFSTGILHPHICPQNRTLDLEHFLKEWRKDQHHIWHVLRYIQAIFADPEGSICTGQSSSGDLVVMDEVRNMEALNMLAQSRPEYIKRVQEQAIASRNHIYDRPLTDDPHYIIVEPYCADRHLKIMDQLKSPCWKEATSMDCSQPSEYLGHIDSSRQLDEEEANQLEKLRRARIPEPHRDEAVDFL.

Residues 15-178 (KQGYHILAEY…VQEQAIASRN (164 aa)) enclose the UBC core domain.

It belongs to the ubiquitin-conjugating enzyme family. FTS subfamily.

This is Protein crossbronx-like from Drosophila erecta (Fruit fly).